Consider the following 638-residue polypeptide: 2-isopropylmalate synthase (638 aa).

The 275-residue stretch at 72–346 folds into the Pyruvate carboxyltransferase domain; it reads PRWCSVDLRD…DPQLDLSNVP (275 aa). Mg(2+)-binding residues include aspartate 81, histidine 285, histidine 287, and asparagine 321. The interval 488–638 is regulatory domain; sequence VEQSGMTAAG…SAINRSQRQR (151 aa).

The protein belongs to the alpha-IPM synthase/homocitrate synthase family. LeuA type 2 subfamily. In terms of assembly, homodimer. Mg(2+) serves as cofactor.

It localises to the cytoplasm. The enzyme catalyses 3-methyl-2-oxobutanoate + acetyl-CoA + H2O = (2S)-2-isopropylmalate + CoA + H(+). The protein operates within amino-acid biosynthesis; L-leucine biosynthesis; L-leucine from 3-methyl-2-oxobutanoate: step 1/4. Its function is as follows. Catalyzes the condensation of the acetyl group of acetyl-CoA with 3-methyl-2-oxobutanoate (2-ketoisovalerate) to form 3-carboxy-3-hydroxy-4-methylpentanoate (2-isopropylmalate). The sequence is that of 2-isopropylmalate synthase from Bifidobacterium longum subsp. infantis (strain ATCC 15697 / DSM 20088 / JCM 1222 / NCTC 11817 / S12).